Reading from the N-terminus, the 274-residue chain is tRNA pseudouridine synthase A (274 aa).

Residue Asp51 is the Nucleophile of the active site. Tyr109 contributes to the substrate binding site.

It belongs to the tRNA pseudouridine synthase TruA family. As to quaternary structure, homodimer.

It carries out the reaction uridine(38/39/40) in tRNA = pseudouridine(38/39/40) in tRNA. Its function is as follows. Formation of pseudouridine at positions 38, 39 and 40 in the anticodon stem and loop of transfer RNAs. In Acidovorax sp. (strain JS42), this protein is tRNA pseudouridine synthase A.